The chain runs to 447 residues: Phosphoglucosamine mutase (447 aa).

Catalysis depends on Ser100, which acts as the Phosphoserine intermediate. Mg(2+) contacts are provided by Ser100, Asp239, Asp241, and Asp243. At Ser100 the chain carries Phosphoserine.

This sequence belongs to the phosphohexose mutase family. The cofactor is Mg(2+). Post-translationally, activated by phosphorylation.

The catalysed reaction is alpha-D-glucosamine 1-phosphate = D-glucosamine 6-phosphate. Functionally, catalyzes the conversion of glucosamine-6-phosphate to glucosamine-1-phosphate. The polypeptide is Phosphoglucosamine mutase (Thermoanaerobacter sp. (strain X514)).